The sequence spans 246 residues: Endonuclease NucS (246 aa).

The protein belongs to the NucS endonuclease family.

It is found in the cytoplasm. Its function is as follows. Cleaves both 3' and 5' ssDNA extremities of branched DNA structures. This Corynebacterium urealyticum (strain ATCC 43042 / DSM 7109) protein is Endonuclease NucS.